Consider the following 67-residue polypeptide: Large ribosomal subunit protein eL38 (67 aa).

Belongs to the eukaryotic ribosomal protein eL38 family.

The sequence is that of Large ribosomal subunit protein eL38 (rpl38e) from Aeropyrum pernix (strain ATCC 700893 / DSM 11879 / JCM 9820 / NBRC 100138 / K1).